The primary structure comprises 482 residues: Coagulation factor X (482 aa).

Positions 1-20 are cleaved as a signal peptide; it reads MESPVRLSLLYVVLASLLLP. The propeptide occupies 21–40; sequence GRSVFINRERANNVLQRIRR. The Gla domain occupies 41–85; it reads ANSFFEEIKKGNLERECVEEICSFEEAREVFEDNEKTTEFWNKYE. A 4-carboxyglutamate mark is found at glutamate 46, glutamate 47, glutamate 54, glutamate 56, glutamate 59, glutamate 60, glutamate 65, glutamate 66, glutamate 69, glutamate 72, glutamate 75, and glutamate 79. A disulfide bridge connects residues cysteine 57 and cysteine 62. The EGF-like 1; calcium-binding domain maps to 86–122; sequence DGDQCESSPCQNQGECRDGLGSYTCTCTEGFEGKNCE. 11 disulfide bridges follow: cysteine 90–cysteine 101, cysteine 95–cysteine 110, cysteine 112–cysteine 121, cysteine 129–cysteine 140, cysteine 136–cysteine 149, cysteine 151–cysteine 164, cysteine 172–cysteine 340, cysteine 238–cysteine 243, cysteine 259–cysteine 275, cysteine 388–cysteine 402, and cysteine 413–cysteine 441. A (3R)-3-hydroxyaspartate modification is found at aspartate 103. The region spanning 125–165 is the EGF-like 2 domain; sequence VRKLCSLDNGDCDQFCREEQNSVVCSCAKGYFLGNDGKSCL. A propeptide spans 184–231 (activation peptide); that stretch reads VALNTSNSEPDPEDLMPDADILYPTESPSELLNLNKTEPEANSDDVIR. N-linked (GlcNAc...) asparagine glycosylation is found at asparagine 187 and asparagine 218. The 234-residue stretch at 232–465 folds into the Peptidase S1 domain; that stretch reads IVGGQECKRG…FLKWIDRSMK (234 aa). Residues histidine 274 and aspartate 320 each act as charge relay system in the active site. The active-site Charge relay system is serine 417.

It belongs to the peptidase S1 family. In terms of assembly, the two chains are formed from a single-chain precursor by the excision of two Arg residues and are held together by 1 or more disulfide bonds. Forms a heterodimer with SERPINA5. Interacts with ixolaris, an anticoagulant protein from Ixodes scapularis saliva. Post-translationally, the vitamin K-dependent, enzymatic carboxylation of some glutamate residues allows the modified protein to bind calcium. N- and O-glycosylated. In terms of processing, proteolytically cleaved and activated by cathepsin CTSG. The activation peptide is cleaved by factor IXa (in the intrinsic pathway), or by factor VIIa (in the extrinsic pathway). Post-translationally, the iron and 2-oxoglutarate dependent 3-hydroxylation of aspartate and asparagine is (R) stereospecific within EGF domains. In terms of tissue distribution, plasma; synthesized in the liver.

It localises to the secreted. The catalysed reaction is Selective cleavage of Arg-|-Thr and then Arg-|-Ile bonds in prothrombin to form thrombin.. Its activity is regulated as follows. Inhibited by SERPINA5. Functionally, factor Xa is a vitamin K-dependent glycoprotein that converts prothrombin to thrombin in the presence of factor Va, calcium and phospholipid during blood clotting. Factor Xa activates pro-inflammatory signaling pathways in a protease-activated receptor (PAR)-dependent manner. This is Coagulation factor X (F10) from Rattus norvegicus (Rat).